Reading from the N-terminus, the 310-residue chain is Prephenate dehydratase (310 aa).

One can recognise a Prephenate dehydratase domain in the interval 3 to 190; that stretch reads RIAYLGPEGT…ARTRFVLVGL (188 aa). Residues 204 to 281 enclose the ACT domain; sequence AVVLRLVNEP…VDVRYLGSWP (78 aa).

In terms of assembly, homodimer.

It catalyses the reaction prephenate + H(+) = 3-phenylpyruvate + CO2 + H2O. Its pathway is amino-acid biosynthesis; L-phenylalanine biosynthesis; phenylpyruvate from prephenate: step 1/1. The chain is Prephenate dehydratase (pheA) from Mycolicibacterium smegmatis (strain ATCC 700084 / mc(2)155) (Mycobacterium smegmatis).